The sequence spans 204 residues: dITP/XTP pyrophosphatase (204 aa).

8–13 is a substrate binding site; it reads SNNAKK. Residues glutamate 43 and aspartate 72 each coordinate Mg(2+). Aspartate 72 (proton acceptor) is an active-site residue. Residues serine 73, 155–158, lysine 180, and 185–186 contribute to the substrate site; these read FGYD and HR.

This sequence belongs to the HAM1 NTPase family. Homodimer. The cofactor is Mg(2+).

The catalysed reaction is XTP + H2O = XMP + diphosphate + H(+). It carries out the reaction dITP + H2O = dIMP + diphosphate + H(+). It catalyses the reaction ITP + H2O = IMP + diphosphate + H(+). Pyrophosphatase that catalyzes the hydrolysis of nucleoside triphosphates to their monophosphate derivatives, with a high preference for the non-canonical purine nucleotides XTP (xanthosine triphosphate), dITP (deoxyinosine triphosphate) and ITP. Seems to function as a house-cleaning enzyme that removes non-canonical purine nucleotides from the nucleotide pool, thus preventing their incorporation into DNA/RNA and avoiding chromosomal lesions. In Cutibacterium acnes (strain DSM 16379 / KPA171202) (Propionibacterium acnes), this protein is dITP/XTP pyrophosphatase.